The following is a 380-amino-acid chain: MAKKVAICTLLYSRDYLPGALTLAYQLQKLLKHAVVEDEITLCLLIEKKLFEDEFKPQEIALIRSLFKEIIIIEPLKDQEKSIEKNKANLELLKRPELSHTLLKARLWELVQFDQVLFLDADTLPLNKDFFEILRLYPEQTRFQIAAVPDIGWPDMFNTGVLLLIPDLDMATSLQDFLIKTVSIDGADQGIFNQFFNPICNYSKEVLHKVSPLMEWIRLPFTYNVTMPNYGYQSSPAMNFFQQHIRLIHFIGTFKPWSRNTTDYDDHYYQLWRSTQRELYSECHLSNYFTHLQLGNIETETNFYHEPPCLQDLLNHGTRENQKHVDLDITSVDRNASQKSTAEKHDIEKPTSKPQSAFKFDWESTDYLDRVQRAFPKPDT.

3 residues coordinate UDP: leucine 10, tyrosine 16, and arginine 95. The UDP-alpha-D-glucose site is built by leucine 10, tyrosine 16, arginine 95, lysine 104, aspartate 120, alanine 121, aspartate 122, asparagine 158, threonine 159, aspartate 185, aspartate 188, and glutamine 189. UDP-binding residues include aspartate 120, alanine 121, and aspartate 122. Aspartate 120 is a Mn(2+) binding site. Position 122 (aspartate 122) interacts with Mn(2+). Tyrosine 230 and tyrosine 232 each carry an O-linked (Glc...) tyrosine glycan. UDP contacts are provided by histidine 249, glycine 252, and lysine 255. Mn(2+) is bound at residue histidine 249. Residues glycine 252 and lysine 255 each contribute to the UDP-alpha-D-glucose site. A disordered region spans residues 331–357; the sequence is SVDRNASQKSTAEKHDIEKPTSKPQSA. A compositionally biased stretch (basic and acidic residues) spans 341 to 351; it reads TAEKHDIEKPT. Tyrosine 367 carries O-linked (Glc...) tyrosine glycosylation.

It belongs to the glycosyltransferase 8 family. Glycogenin subfamily. Interacts with glycogen synthase GSY2. The cofactor is Mn(2+).

It localises to the cytoplasm. The protein resides in the vacuole. The catalysed reaction is L-tyrosyl-[glycogenin] + UDP-alpha-D-glucose = alpha-D-glucosyl-L-tyrosyl-[glycogenin] + UDP + H(+). It catalyses the reaction [1,4-alpha-D-glucosyl](n)-L-tyrosyl-[glycogenin] + UDP-alpha-D-glucose = [1,4-alpha-D-glucosyl](n+1)-L-tyrosyl-[glycogenin] + UDP + H(+). Its function is as follows. Self-glucosylating initiator of glycogen synthesis. It catalyzes the formation of a short alpha (1,4)-glucosyl chain covalently attached via a glucose 1-O-tyrosyl linkage to internal tyrosine residues and these chains act as primers for the elongation reaction catalyzed by glycogen synthase. Capable of transferring glucosyl residues to unbound acceptors such as free oligoglucans or oligoglucan derivatives. The sequence is that of Glycogenin-2 (GLG2) from Saccharomyces cerevisiae (strain YJM789) (Baker's yeast).